Reading from the N-terminus, the 125-residue chain is Homeobox protein HD-8 (125 aa).

A DNA-binding region (homeobox) is located at residues 30–89 (EPDTRTRKTTFQMMVLKEVFKIAPHPSTLTKADLALMIKLPLKAVQIWFQNERSRKERGG).

The protein resides in the nucleus. This Encephalitozoon cuniculi (strain GB-M1) (Microsporidian parasite) protein is Homeobox protein HD-8 (HD-8).